Reading from the N-terminus, the 560-residue chain is MECFVPLRCDLDGSNIEQLRQSHLSRKFIIFDEQLNLWLWFQGNSQENKRFVLQNMIILINEAQVTRTSTIDDYFTQVENNENLWRLKNDCCSKILFKSNVVMNNGYNNQIKFVFEYKSVDANFNNQDSLQDPQAKYTLDKYSSEEILPSFEPVYSWSSAATKSSKNTNNHLEKNNRATHRVSSKNSEVHEADVSRNPNTFTLKLQYPIFSLLNMRLRNISLKSEHCILSSLDFQTSKASEQLTKKFIYPQEHNSFLKLNFQEISYKLIDGTSQIELDPICPLKVPLTAFSYDSISATFKLVLLPKSTQPHRVKITLAYELELHPNLKLPVRTSWETEVTLKRSMPISSTSSQYSSNNNNTNHSASFNGAANNVNSGGLANLRLGGVSSSRFSLGAASTTSLVNSKLSNVKFKFINSNIKVIKGEKFTMRLQIINSSSSPLDLVVYYNNTINPIPSANNVRNSNGINNCGMNNGTIPNSPLTLENQYQLHNKYRKIAEGIILLSNDYKIPVVPPRETYFADLRFIGIMSGYYGTLSGLKVLDLNTNELIEVGNGASVLIQ.

The tract at residues 164–193 (SSKNTNNHLEKNNRATHRVSSKNSEVHEAD) is disordered. S393 and S398 each carry phosphoserine.

Part of the multisubunit TRAPP (transport protein particle) II complex composed of BET3, BET5, TRS20, TRS23, TRS31, TRS33, TRS65, TRS120 and TRS130. Interacts directly with TRS120 and TRS130.

Its subcellular location is the cytoplasm. It is found in the golgi apparatus. It localises to the cis-Golgi network. Its pathway is glycan metabolism; beta-glucan biosynthesis. Its function is as follows. Specific subunit of the TRAPP II complex, a highly conserved vesicle tethering complex that functions in the late Golgi as a guanine nucleotide exchanger (GEF) for the Golgi YPT1 GTPase. TRS65 plays a role in the YPT GEF activity of TRAPP II in concert with the two other TRAPP II-specific subunits TRS120 and TRS130. Involved in cell wall (1--&gt;6)-beta-glucan synthesis. The sequence is that of Trafficking protein particle complex II-specific subunit 65 (TRS65) from Saccharomyces cerevisiae (strain ATCC 204508 / S288c) (Baker's yeast).